The following is a 483-amino-acid chain: Protein nucleotidyltransferase YdiU (483 aa).

Residues G81, G83, R84, K103, D115, G116, R166, and R173 each contribute to the ATP site. The active-site Proton acceptor is D244. Residues N245 and D254 each coordinate Mg(2+). Position 254 (D254) interacts with ATP.

Belongs to the SELO family. It depends on Mg(2+) as a cofactor. The cofactor is Mn(2+).

The enzyme catalyses L-seryl-[protein] + ATP = 3-O-(5'-adenylyl)-L-seryl-[protein] + diphosphate. It carries out the reaction L-threonyl-[protein] + ATP = 3-O-(5'-adenylyl)-L-threonyl-[protein] + diphosphate. The catalysed reaction is L-tyrosyl-[protein] + ATP = O-(5'-adenylyl)-L-tyrosyl-[protein] + diphosphate. It catalyses the reaction L-histidyl-[protein] + UTP = N(tele)-(5'-uridylyl)-L-histidyl-[protein] + diphosphate. The enzyme catalyses L-seryl-[protein] + UTP = O-(5'-uridylyl)-L-seryl-[protein] + diphosphate. It carries out the reaction L-tyrosyl-[protein] + UTP = O-(5'-uridylyl)-L-tyrosyl-[protein] + diphosphate. Its function is as follows. Nucleotidyltransferase involved in the post-translational modification of proteins. It can catalyze the addition of adenosine monophosphate (AMP) or uridine monophosphate (UMP) to a protein, resulting in modifications known as AMPylation and UMPylation. This chain is Protein nucleotidyltransferase YdiU, found in Shewanella pealeana (strain ATCC 700345 / ANG-SQ1).